We begin with the raw amino-acid sequence, 240 residues long: 4-hydroxy-tetrahydrodipicolinate reductase (240 aa).

Residues 79-81 (ATT) and 103-106 (SANM) each bind NAD(+). His-135 (proton donor/acceptor) is an active-site residue. Residue His-136 coordinates (S)-2,3,4,5-tetrahydrodipicolinate. The Proton donor role is filled by Lys-139. Residue 145–146 (GT) coordinates (S)-2,3,4,5-tetrahydrodipicolinate.

It belongs to the DapB family.

The protein localises to the cytoplasm. The catalysed reaction is (S)-2,3,4,5-tetrahydrodipicolinate + NAD(+) + H2O = (2S,4S)-4-hydroxy-2,3,4,5-tetrahydrodipicolinate + NADH + H(+). It catalyses the reaction (S)-2,3,4,5-tetrahydrodipicolinate + NADP(+) + H2O = (2S,4S)-4-hydroxy-2,3,4,5-tetrahydrodipicolinate + NADPH + H(+). It participates in amino-acid biosynthesis; L-lysine biosynthesis via DAP pathway; (S)-tetrahydrodipicolinate from L-aspartate: step 4/4. Its function is as follows. Catalyzes the conversion of 4-hydroxy-tetrahydrodipicolinate (HTPA) to tetrahydrodipicolinate. In Staphylococcus aureus (strain Mu3 / ATCC 700698), this protein is 4-hydroxy-tetrahydrodipicolinate reductase.